The following is a 247-amino-acid chain: Serine/threonine-protein phosphatase 2A activator (247 aa).

This sequence belongs to the PTPA-type PPIase family.

It localises to the cytoplasm. It carries out the reaction [protein]-peptidylproline (omega=180) = [protein]-peptidylproline (omega=0). Functionally, PPIases accelerate the folding of proteins. It catalyzes the cis-trans isomerization of proline imidic peptide bonds in oligopeptides. Acts as a regulatory subunit for PP2A-like phosphatases modulating their activity or substrate specificity, probably by inducing a conformational change in the catalytic subunit, a direct target of the PPIase. Can reactivate inactive phosphatase PP2A-phosphatase methylesterase complexes (PP2Ai) in presence of ATP and Mg(2+) by dissociating the inactive form from the complex. This Encephalitozoon cuniculi (strain GB-M1) (Microsporidian parasite) protein is Serine/threonine-protein phosphatase 2A activator.